The following is a 185-amino-acid chain: Phospholipase A2 inhibitor 25 kDa subunit (185 aa).

Disulfide bonds link Cys3–Cys27, Cys6–Cys13, Cys20–Cys48, Cys54–Cys75, Cys76–Cys81, Cys101–Cys126, Cys119–Cys146, and Cys152–Cys172.

Belongs to the CNF-like-inhibitor family. As to quaternary structure, heterodimer with phospholipase A2 inhibitor 31 kDa. In terms of tissue distribution, expressed by the liver.

The protein resides in the secreted. Inhibits the enzymatic activity of phospholipase A2. The polypeptide is Phospholipase A2 inhibitor 25 kDa subunit (Naja kaouthia (Monocled cobra)).